A 414-amino-acid chain; its full sequence is uncharacterized protein (414 aa).

Disordered regions lie at residues Ser-136–Thr-168, Lys-298–Arg-322, and Pro-350–Ser-382.

This is an uncharacterized protein from Macaca fascicularis (Crab-eating macaque).